Consider the following 224-residue polypeptide: Extracellular protease inhibitor 10 (224 aa).

The N-terminal stretch at 1–22 (MKSAFTLSLALVAVTATISAAA) is a signal peptide. 3 Kazal-like domains span residues 23–72 (DDNC…ECAS), 90–127 (TSGTVGCPDMCLDVYDPVSDENGKEYSNQCYMEMAKCK), and 156–210 (GYQG…PCPS). Asn25 carries an N-linked (GlcNAc...) asparagine glycan. Cystine bridges form between Cys26/Cys56, Cys30/Cys49, and Cys38/Cys70. Positions 69-92 (ECASTPASSATPSPVTSSTGSTSG) are disordered. The segment covering 71-92 (ASTPASSATPSPVTSSTGSTSG) has biased composition (low complexity). 5 disulfide bridges follow: Cys96/Cys126, Cys100/Cys119, Cys162/Cys193, Cys167/Cys186, and Cys175/Cys208. A glycan (N-linked (GlcNAc...) asparagine) is linked at Asn199. Positions 202-224 (MVGEGPCPSQEQQQQQQQQQQKL) are disordered. The segment covering 211–224 (QEQQQQQQQQQQKL) has biased composition (low complexity).

In terms of assembly, interacts with host subtilisin-like protease P69B.

Its subcellular location is the secreted. Its function is as follows. Secreted effector that interacts with and inhibits the pathogenesis-related P69B subtilisin-like serine protease of host tomato. Inhibition of host proteases by a pathogen extracellular protease inhibitor forms a specific type of defense-counterdefense mechanism between plants and microbial pathogens. This is Extracellular protease inhibitor 10 from Phytophthora infestans (Potato late blight agent).